A 282-amino-acid chain; its full sequence is Aldo-keto reductase MUL_1987 (282 aa).

Residue Tyr57 is the Proton donor of the active site. NADPH contacts are provided by Leu197, Ile235, Ser238, Thr246, Asn247, and Arg273.

This sequence belongs to the aldo/keto reductase family.

The polypeptide is Aldo-keto reductase MUL_1987 (Mycobacterium ulcerans (strain Agy99)).